The following is a 660-amino-acid chain: tRNA 5-methylaminomethyl-2-thiouridine biosynthesis bifunctional protein MnmC (660 aa).

The tRNA (mnm(5)s(2)U34)-methyltransferase stretch occupies residues 1 to 233 (MTHSHAQLVW…KRHISHGWIA (233 aa)). The segment at 260-660 (VGGGLAGAAS…IRRKLDPDAL (401 aa)) is FAD-dependent cmnm(5)s(2)U34 oxidoreductase.

In the N-terminal section; belongs to the methyltransferase superfamily. tRNA (mnm(5)s(2)U34)-methyltransferase family. It in the C-terminal section; belongs to the DAO family. It depends on FAD as a cofactor.

It is found in the cytoplasm. It carries out the reaction 5-aminomethyl-2-thiouridine(34) in tRNA + S-adenosyl-L-methionine = 5-methylaminomethyl-2-thiouridine(34) in tRNA + S-adenosyl-L-homocysteine + H(+). In terms of biological role, catalyzes the last two steps in the biosynthesis of 5-methylaminomethyl-2-thiouridine (mnm(5)s(2)U) at the wobble position (U34) in tRNA. Catalyzes the FAD-dependent demodification of cmnm(5)s(2)U34 to nm(5)s(2)U34, followed by the transfer of a methyl group from S-adenosyl-L-methionine to nm(5)s(2)U34, to form mnm(5)s(2)U34. This is tRNA 5-methylaminomethyl-2-thiouridine biosynthesis bifunctional protein MnmC from Chromobacterium violaceum (strain ATCC 12472 / DSM 30191 / JCM 1249 / CCUG 213 / NBRC 12614 / NCIMB 9131 / NCTC 9757 / MK).